The following is a 249-amino-acid chain: 5'-nucleotidase SurE (249 aa).

Positions 8, 9, 39, and 91 each coordinate a divalent metal cation.

It belongs to the SurE nucleotidase family. A divalent metal cation is required as a cofactor.

The protein resides in the cytoplasm. The catalysed reaction is a ribonucleoside 5'-phosphate + H2O = a ribonucleoside + phosphate. In terms of biological role, nucleotidase that shows phosphatase activity on nucleoside 5'-monophosphates. This is 5'-nucleotidase SurE from Pseudomonas entomophila (strain L48).